The following is a 239-amino-acid chain: SkfA peptide export ATP-binding protein SkfE (239 aa).

The region spanning 4 to 232 (MQVQNLSKCY…AEWRKEVIRL (229 aa)) is the ABC transporter domain. 36–43 (GPNGAGKT) is an ATP binding site.

It belongs to the ABC transporter superfamily. SkfA peptide export (TC 3.A.1.128.1) family.

It is found in the cell membrane. It catalyses the reaction sulfate(out) + ATP + H2O = sulfate(in) + ADP + phosphate + H(+). It carries out the reaction thiosulfate(out) + ATP + H2O = thiosulfate(in) + ADP + phosphate + H(+). Its function is as follows. Probably part of the ABC transporter SkfEF involved in the export of the bacteriocin SKF. Probably responsible for energy coupling to the transport system. The protein is SkfA peptide export ATP-binding protein SkfE of Bacillus subtilis (strain 168).